A 356-amino-acid chain; its full sequence is Ubiquitin-conjugating enzyme E2 variant 3 (356 aa).

The segment at 1–83 is disordered; the sequence is MSDQPGTSRP…LEDLHNYHRE (83 aa). The span at 18–32 shows a compositional bias: polar residues; the sequence is PTKTATRRRARPIAI. The segment covering 63–76 has biased composition (basic and acidic residues); sequence QPRKTVPKNVPLED. Residues 169–324 form the UBC core domain; that stretch reads DIITEFMNRS…AREFVMKMAG (156 aa).

This sequence belongs to the ubiquitin-conjugating enzyme family. As to quaternary structure, may interact with pmk-3. As to expression, expressed ubiquitously.

The protein resides in the nucleus. The protein localises to the cytoplasm. It is found in the cell projection. Its subcellular location is the dendrite. It localises to the axon. The protein resides in the cilium. In terms of biological role, possible negative regulator of polyubiquitination. May modulate the activity of the p38 MAP kinase pnk-3. May have a role in axon termination and synaptic transmission at motor and mechanosensory neurons. Plays a role in intraflagellar transport in cilia and cilium length regulation. This Caenorhabditis elegans protein is Ubiquitin-conjugating enzyme E2 variant 3.